We begin with the raw amino-acid sequence, 134 residues long: Lymphocyte antigen 6A-2/6E-1 (134 aa).

An N-terminal signal peptide occupies residues 1-26 (MDTSHTTKSCLLILLVALLCAERAQG). The region spanning 27–119 (LECYQCYGVP…NGGSTWTMAG (93 aa)) is the UPAR/Ly6 domain. Disulfide bonds link C29-C53, C32-C41, C46-C74, C78-C98, and C99-C104. G112 carries GPI-anchor amidated glycine lipidation. Positions 113 to 134 (STWTMAGVLLFSLSSVLLQTLL) are cleaved as a propeptide — removed in mature form.

In terms of processing, O-glycosylated. Not N-glycosylated. Post-translationally, not phosphorylated. Widely expressed.

Its subcellular location is the cell membrane. Its function is as follows. T-cell activation. The sequence is that of Lymphocyte antigen 6A-2/6E-1 (Ly6a) from Mus musculus (Mouse).